We begin with the raw amino-acid sequence, 532 residues long: Invertase 2 (532 aa).

A signal peptide spans 1–19; sequence MLLQAFLFLLAGFAAKISA. Asn23 is a glycosylation site (N-linked (GlcNAc...) asparagine). Substrate-binding positions include 39–42 and Gln60; that span reads WMND. Asp42 is a catalytic residue. Asn64 carries an N-linked (GlcNAc...) asparagine; partial glycan. Asn97 carries N-linked (GlcNAc...) asparagine glycosylation. 102–103 contributes to the substrate binding site; sequence FS. Asn111 and Asn118 each carry an N-linked (GlcNAc...) asparagine glycan. N-linked (GlcNAc...) asparagine; partial glycosylation occurs at Asn165. Substrate-binding positions include 170 to 171 and Glu223; that span reads RD. 2 N-linked (GlcNAc...) asparagine; partial glycosylation sites follow: Asn266 and Asn275. Trp311 is a substrate binding site. Asn356, Asn369, Asn384, and Asn398 each carry an N-linked (GlcNAc...) asparagine glycan. An N-linked (GlcNAc...) asparagine; partial glycan is attached at Asn512.

The protein belongs to the glycosyl hydrolase 32 family. Post-translationally, isoform Secreted is glycosylated. Isoform Intracellular is not glycosylated.

The protein resides in the cytoplasm. It is found in the secreted. It catalyses the reaction Hydrolysis of terminal non-reducing beta-D-fructofuranoside residues in beta-D-fructofuranosides.. The sequence is that of Invertase 2 (SUC2) from Saccharomyces cerevisiae (strain ATCC 204508 / S288c) (Baker's yeast).